Here is a 374-residue protein sequence, read N- to C-terminus: Cell wall integrity and stress response component 1 (374 aa).

Positions 1-29 (MVFLNSSPFKGRLLFFVYLLIISTRLVAA) are cleaved as a signal peptide. Residues 30 to 292 (DMNTQYGCYL…SNHTSLNAGA (263 aa)) lie on the Extracellular side of the membrane. The WSC domain occupies 31–119 (MNTQYGCYLV…DLYWSVYLTG (89 aa)). The disordered stretch occupies residues 132-236 (VSSTTSSSSS…SSSSSSRPSS (105 aa)). N-linked (GlcNAc...) asparagine glycans are attached at residues Asn278 and Asn284. A helical transmembrane segment spans residues 293–313 (IVGIVIGCVAFAVVMALCIFL). Topologically, residues 314–374 (YFYFRRFKIR…RKILRVTNLN (61 aa)) are cytoplasmic. At Ser354 the chain carries Phosphoserine.

O-mannosylated.

The protein resides in the membrane. This Schizosaccharomyces pombe (strain 972 / ATCC 24843) (Fission yeast) protein is Cell wall integrity and stress response component 1 (wsc1).